The sequence spans 392 residues: Phosphoglycerate kinase (392 aa).

Residues 21–23 (DFN), R36, 59–62 (HLGR), R113, and R146 contribute to the substrate site. ATP-binding positions include K197, E319, and 345-348 (GGDT).

Belongs to the phosphoglycerate kinase family. Monomer.

The protein resides in the cytoplasm. It carries out the reaction (2R)-3-phosphoglycerate + ATP = (2R)-3-phospho-glyceroyl phosphate + ADP. It participates in carbohydrate degradation; glycolysis; pyruvate from D-glyceraldehyde 3-phosphate: step 2/5. The chain is Phosphoglycerate kinase from Francisella philomiragia subsp. philomiragia (strain ATCC 25017 / CCUG 19701 / FSC 153 / O#319-036).